The primary structure comprises 185 residues: Ribosome-recycling factor (185 aa).

This sequence belongs to the RRF family.

It is found in the cytoplasm. In terms of biological role, responsible for the release of ribosomes from messenger RNA at the termination of protein biosynthesis. May increase the efficiency of translation by recycling ribosomes from one round of translation to another. In Campylobacter jejuni (strain RM1221), this protein is Ribosome-recycling factor.